The sequence spans 1304 residues: TPR-containing protein DDB_G0280363 (1304 aa).

Disordered regions lie at residues 19-85, 153-195, 296-334, 447-477, 576-687, and 706-728; these read QQHH…HPQQ, NINN…NSSL, LPST…YTQQ, GFNW…QRQQ, QNQQ…VTTI, and LTTV…VESP. 3 stretches are compositionally biased toward low complexity: residues 25 to 44, 52 to 85, and 153 to 194; these read QQNN…QFNQ, HQQH…HPQQ, and NINN…NNSS. The span at 296–306 shows a compositional bias: polar residues; it reads LPSTNSSIVSR. Low complexity predominate over residues 307-316; sequence QQQLQQQQQK. Polar residues predominate over residues 448-465; it reads FNWSPSLQPDQSTSTNHT. Low complexity-rich tracts occupy residues 466–477 and 576–597; these read QAMLQQQQQRQQ and QNQQ…PNQH. The segment covering 598–625 has biased composition (basic residues); sequence HGQHQHNQHNQHHNQHHNQSHPNHKNQH. Over residues 626 to 687 the composition is skewed to low complexity; sequence QKQNQTQQST…NNNTNNVTTI (62 aa). TPR repeat units follow at residues 769-802, 899-932, 978-1011, 1046-1079, 1084-1111, 1112-1150, and 1152-1184; these read WRVY…QPYI, MKHV…VEKG, WKIY…CPEN, SKLR…AHVE, WKVF…KESL, KIHS…VPKS, and EVWC…TPQF.

This Dictyostelium discoideum (Social amoeba) protein is TPR-containing protein DDB_G0280363.